The following is a 284-amino-acid chain: MEMO1 family protein Saci_0089 (284 aa).

The protein belongs to the MEMO1 family.

The chain is MEMO1 family protein Saci_0089 from Sulfolobus acidocaldarius (strain ATCC 33909 / DSM 639 / JCM 8929 / NBRC 15157 / NCIMB 11770).